A 235-amino-acid chain; its full sequence is Small ribosomal subunit protein uS3 (235 aa).

The region spanning 39 to 107 is the KH type-2 domain; the sequence is VRSYVKKKLI…PAQVNISEIR (69 aa).

The protein belongs to the universal ribosomal protein uS3 family. As to quaternary structure, part of the 30S ribosomal subunit. Forms a tight complex with proteins S10 and S14.

Binds the lower part of the 30S subunit head. Binds mRNA in the 70S ribosome, positioning it for translation. The sequence is that of Small ribosomal subunit protein uS3 from Buchnera aphidicola subsp. Cinara cedri (strain Cc).